Consider the following 599-residue polypeptide: Elongation factor 4 (599 aa).

In terms of domain architecture, tr-type G spans S5–V187. Residues D17–T22 and N134–D137 each bind GTP.

Belongs to the TRAFAC class translation factor GTPase superfamily. Classic translation factor GTPase family. LepA subfamily.

It is found in the cell inner membrane. It catalyses the reaction GTP + H2O = GDP + phosphate + H(+). Functionally, required for accurate and efficient protein synthesis under certain stress conditions. May act as a fidelity factor of the translation reaction, by catalyzing a one-codon backward translocation of tRNAs on improperly translocated ribosomes. Back-translocation proceeds from a post-translocation (POST) complex to a pre-translocation (PRE) complex, thus giving elongation factor G a second chance to translocate the tRNAs correctly. Binds to ribosomes in a GTP-dependent manner. In Anaplasma marginale (strain Florida), this protein is Elongation factor 4.